The following is a 361-amino-acid chain: NADP-dependent alcohol dehydrogenase 7 (361 aa).

Residue Cys-46 coordinates Zn(2+). Positions 47 and 51 each coordinate NADP(+). 6 residues coordinate Zn(2+): His-68, Cys-100, Cys-103, Cys-106, Cys-114, and Cys-164. NADP(+) is bound by residues Ile-189, Gly-191, Ile-192, Ser-211, Arg-212, Lys-216, Cys-251, Ser-253, Ser-256, Ile-276, Ser-300, and Ile-302. Phosphoserine is present on Ser-316. NADP(+) is bound at residue Arg-349.

The protein belongs to the zinc-containing alcohol dehydrogenase family. As to quaternary structure, homodimer. It depends on Zn(2+) as a cofactor.

The catalysed reaction is a primary alcohol + NADP(+) = an aldehyde + NADPH + H(+). It carries out the reaction (E)-cinnamyl alcohol + NADP(+) = (E)-cinnamaldehyde + NADPH + H(+). It catalyses the reaction 3-methylbutanol + NADP(+) = 3-methylbutanal + NADPH + H(+). Its function is as follows. NADP-dependent alcohol dehydrogenase with a broad substrate specificity. The oxidative reactions are more than 100 times less efficient than the corresponding reductions, suggesting that the enzyme acts as an aldehyde reductase, rather than as an alcohol dehydrogenase. This is NADP-dependent alcohol dehydrogenase 7 (ADH7) from Saccharomyces cerevisiae (strain ATCC 204508 / S288c) (Baker's yeast).